The following is a 440-amino-acid chain: Xylose isomerase (440 aa).

2 residues coordinate Mg(2+): aspartate 307 and aspartate 309.

This sequence belongs to the xylose isomerase family. Homotetramer. Mg(2+) serves as cofactor.

The protein resides in the cytoplasm. The enzyme catalyses alpha-D-xylose = alpha-D-xylulofuranose. This is Xylose isomerase from Escherichia coli (strain K12 / MC4100 / BW2952).